The chain runs to 89 residues: Small ribosomal subunit protein uS15 (89 aa).

It belongs to the universal ribosomal protein uS15 family. Part of the 30S ribosomal subunit. Forms a bridge to the 50S subunit in the 70S ribosome, contacting the 23S rRNA.

In terms of biological role, one of the primary rRNA binding proteins, it binds directly to 16S rRNA where it helps nucleate assembly of the platform of the 30S subunit by binding and bridging several RNA helices of the 16S rRNA. Functionally, forms an intersubunit bridge (bridge B4) with the 23S rRNA of the 50S subunit in the ribosome. The polypeptide is Small ribosomal subunit protein uS15 (Bacteroides fragilis (strain ATCC 25285 / DSM 2151 / CCUG 4856 / JCM 11019 / LMG 10263 / NCTC 9343 / Onslow / VPI 2553 / EN-2)).